The chain runs to 156 residues: Ribosomal RNA large subunit methyltransferase H (156 aa).

S-adenosyl-L-methionine is bound by residues Leu73, Gly104, and 123–128; that span reads IGPLTL.

Belongs to the RNA methyltransferase RlmH family. As to quaternary structure, homodimer.

It is found in the cytoplasm. The catalysed reaction is pseudouridine(1915) in 23S rRNA + S-adenosyl-L-methionine = N(3)-methylpseudouridine(1915) in 23S rRNA + S-adenosyl-L-homocysteine + H(+). Its function is as follows. Specifically methylates the pseudouridine at position 1915 (m3Psi1915) in 23S rRNA. The sequence is that of Ribosomal RNA large subunit methyltransferase H from Xanthomonas axonopodis pv. citri (strain 306).